We begin with the raw amino-acid sequence, 205 residues long: Macrophage immunometabolism regulator (205 aa).

Residues 1–40 (MEVDINGVNRTNNSVPSTTEGSSPSKPDPEKPRCSSTPCS) form a disordered region. Polar residues predominate over residues 8–25 (VNRTNNSVPSTTEGSSPS).

It belongs to the UNC119-binding protein family. Interacts with unc119 family proteins; interaction preferentially takes place when unc119 proteins are unliganded with myristoylated proteins.

It localises to the cytoplasm. Its subcellular location is the cell projection. The protein resides in the cilium. In terms of biological role, may play a role in immune regulation through regulation of the macrophage function. May also play a role in trafficking of proteins via its interaction with unc119 family cargo adapters. May play a role in ciliary membrane localization. In Xenopus tropicalis (Western clawed frog), this protein is Macrophage immunometabolism regulator (macir).